The sequence spans 494 residues: Anaerobic nitric oxide reductase flavorubredoxin (494 aa).

Residues 30–210 (TKGTSYNSYL…PFSALVTAKI (181 aa)) are zinc metallo-hydrolase. Positions 79, 81, 83, 147, 166, and 227 each coordinate Fe cation. The Flavodoxin-like domain occupies 254-393 (ITIFYDSMSN…ECREHGQQIA (140 aa)). FMN contacts are provided by residues 260 to 264 (SMSNN) and 342 to 369 (AFGS…ETAI). The Rubredoxin-like domain maps to 441–492 (CQCMVCTVCNWVYDPAKGEPNQGIEVGTTWADVPDYFLCPECHLGKDVFVEY). Fe cation contacts are provided by Cys446, Cys449, Cys479, and Cys482.

It in the N-terminal section; belongs to the zinc metallo-hydrolase group 3 family. Homotetramer. Fe cation serves as cofactor. The cofactor is FMN.

Its subcellular location is the cytoplasm. The protein operates within nitrogen metabolism; nitric oxide reduction. Its function is as follows. Anaerobic nitric oxide reductase; uses NADH to detoxify nitric oxide (NO), protecting several 4Fe-4S NO-sensitive enzymes. Has at least 2 reductase partners, only one of which (NorW, flavorubredoxin reductase) has been identified. NO probably binds to the di-iron center; electrons enter from the NorW at rubredoxin and are transferred sequentially to the FMN center and the di-iron center. Also able to function as an aerobic oxygen reductase. In Vibrio vulnificus (strain YJ016), this protein is Anaerobic nitric oxide reductase flavorubredoxin.